We begin with the raw amino-acid sequence, 184 residues long: ATP synthase subunit b 1 (184 aa).

Residues 4-24 (LSILAVLAASPAMAATGPFLS) traverse the membrane as a helical segment.

It belongs to the ATPase B chain family. In terms of assembly, F-type ATPases have 2 components, F(1) - the catalytic core - and F(0) - the membrane proton channel. F(1) has five subunits: alpha(3), beta(3), gamma(1), delta(1), epsilon(1). F(0) has three main subunits: a(1), b(2) and c(10-14). The alpha and beta chains form an alternating ring which encloses part of the gamma chain. F(1) is attached to F(0) by a central stalk formed by the gamma and epsilon chains, while a peripheral stalk is formed by the delta and b chains.

It localises to the cell inner membrane. Its function is as follows. F(1)F(0) ATP synthase produces ATP from ADP in the presence of a proton or sodium gradient. F-type ATPases consist of two structural domains, F(1) containing the extramembraneous catalytic core and F(0) containing the membrane proton channel, linked together by a central stalk and a peripheral stalk. During catalysis, ATP synthesis in the catalytic domain of F(1) is coupled via a rotary mechanism of the central stalk subunits to proton translocation. In terms of biological role, component of the F(0) channel, it forms part of the peripheral stalk, linking F(1) to F(0). The sequence is that of ATP synthase subunit b 1 from Cereibacter sphaeroides (strain ATCC 17023 / DSM 158 / JCM 6121 / CCUG 31486 / LMG 2827 / NBRC 12203 / NCIMB 8253 / ATH 2.4.1.) (Rhodobacter sphaeroides).